The following is a 152-amino-acid chain: Protein FERTILITY RESTORER RF2, mitochondrial (152 aa).

The transit peptide at 1 to 52 (MSTLVTCSLPGAVTTHASTRRFGGSQFQTSQASCISFKREVSAKAVLRSVRC) directs the protein to the mitochondrion. The segment covering 52–69 (CNATQTQSAQRKSSTATV) has biased composition (polar residues). Positions 52–101 (CNATQTQSAQRKSSTATVKRSDPKGKTQGPKLDDGSGGFPPFRFGKGGGG) are disordered.

It is found in the mitochondrion. Its function is as follows. Non-functional allele of the RF2 fertility restorer of rice varieties with LD-type cytoplasmic male sterility (CMS). Non-functional RF2 alleles are found in japonica cultivars Taichung 65 and Nipponbare (AC F1SZ44), and is due to the presence of Thr-78 which replaces Ile-78 in the functional allele. Functional allele is found in the japonica cultivars Fukuyama and Owarihatamochi (AC F1SZ42), and indica cultivar Kasalath (AC F1SZ41). This is Protein FERTILITY RESTORER RF2, mitochondrial from Oryza sativa subsp. japonica (Rice).